A 336-amino-acid chain; its full sequence is Phenylalanine--tRNA ligase alpha subunit (336 aa).

Glu263 contacts Mg(2+).

The protein belongs to the class-II aminoacyl-tRNA synthetase family. Phe-tRNA synthetase alpha subunit type 1 subfamily. Tetramer of two alpha and two beta subunits. Mg(2+) is required as a cofactor.

It is found in the cytoplasm. It carries out the reaction tRNA(Phe) + L-phenylalanine + ATP = L-phenylalanyl-tRNA(Phe) + AMP + diphosphate + H(+). The protein is Phenylalanine--tRNA ligase alpha subunit of Thermosynechococcus vestitus (strain NIES-2133 / IAM M-273 / BP-1).